Consider the following 658-residue polypeptide: Threonine--tRNA ligase (658 aa).

One can recognise a TGS domain in the interval 1 to 64; sequence MSCSISLSFP…GQSGQVEIIT (64 aa). Residues 246–549 are catalytic; that stretch reads DHRRLGREMD…LIENFAGHMP (304 aa). 3 residues coordinate Zn(2+): C343, H394, and H526.

Belongs to the class-II aminoacyl-tRNA synthetase family. Homodimer. Requires Zn(2+) as cofactor.

It localises to the cytoplasm. The catalysed reaction is tRNA(Thr) + L-threonine + ATP = L-threonyl-tRNA(Thr) + AMP + diphosphate + H(+). Functionally, catalyzes the attachment of threonine to tRNA(Thr) in a two-step reaction: L-threonine is first activated by ATP to form Thr-AMP and then transferred to the acceptor end of tRNA(Thr). Also edits incorrectly charged L-seryl-tRNA(Thr). This chain is Threonine--tRNA ligase, found in Bartonella tribocorum (strain CIP 105476 / IBS 506).